The sequence spans 138 residues: Small ribosomal subunit protein uS11 (138 aa).

Residues 1–12 show a composition bias toward low complexity; sequence MPPAKKAAAAPK. The segment at 1-27 is disordered; sequence MPPAKKAAAAPKKGQKTRRREKKNVPH. Residues 13 to 22 show a composition bias toward basic residues; it reads KGQKTRRREK.

The protein belongs to the universal ribosomal protein uS11 family. In terms of assembly, part of the 30S ribosomal subunit. Interacts with proteins S7 and S18. Binds to IF-3.

Functionally, located on the platform of the 30S subunit, it bridges several disparate RNA helices of the 16S rRNA. Forms part of the Shine-Dalgarno cleft in the 70S ribosome. In Mycolicibacterium paratuberculosis (strain ATCC BAA-968 / K-10) (Mycobacterium paratuberculosis), this protein is Small ribosomal subunit protein uS11.